Reading from the N-terminus, the 312-residue chain is Ribonuclease HIII (312 aa).

One can recognise an RNase H type-2 domain in the interval 95–311 (FNCIGSDEAG…REKAQKILKP (217 aa)). The a divalent metal cation site is built by Asp-101, Glu-102, and Asp-206.

This sequence belongs to the RNase HII family. RnhC subfamily. The cofactor is Mn(2+). Requires Mg(2+) as cofactor.

It localises to the cytoplasm. It catalyses the reaction Endonucleolytic cleavage to 5'-phosphomonoester.. Functionally, endonuclease that specifically degrades the RNA of RNA-DNA hybrids. In Staphylococcus aureus (strain MSSA476), this protein is Ribonuclease HIII.